Consider the following 531-residue polypeptide: Bifunctional aspartate aminotransferase and L-aspartate beta-decarboxylase (531 aa).

Gly114 and Asn255 together coordinate L-aspartate. Position 314 is an N6-(pyridoxal phosphate)lysine (Lys314). An L-aspartate-binding site is contributed by Arg496.

This sequence belongs to the class-I pyridoxal-phosphate-dependent aminotransferase family. As to quaternary structure, homododecamer. It depends on pyridoxal 5'-phosphate as a cofactor.

The enzyme catalyses L-aspartate + H(+) = L-alanine + CO2. It carries out the reaction L-aspartate + 2-oxoglutarate = oxaloacetate + L-glutamate. Its activity is regulated as follows. Inhibited by 10 mM Co(2+), Mn(2+) and Ni(2+), and by 1 mM Cu(2+) and Hg(2+). Bifunctional enzyme that has both L-aspartate decarboxylase and transaminase activity. Has high activity with L-aspartate, and much lower activity with D-aspartate, L-lysine and L-glutamine. The protein is Bifunctional aspartate aminotransferase and L-aspartate beta-decarboxylase of Pseudomonas sp.